Here is a 191-residue protein sequence, read N- to C-terminus: SCO2-like protein RP031 (191 aa).

This sequence belongs to the SCO1/2 family.

This is SCO2-like protein RP031 from Rickettsia prowazekii (strain Madrid E).